Consider the following 560-residue polypeptide: DNA ligase B (560 aa).

The N6-AMP-lysine intermediate role is filled by K124.

This sequence belongs to the NAD-dependent DNA ligase family. LigB subfamily.

The catalysed reaction is NAD(+) + (deoxyribonucleotide)n-3'-hydroxyl + 5'-phospho-(deoxyribonucleotide)m = (deoxyribonucleotide)n+m + AMP + beta-nicotinamide D-nucleotide.. Catalyzes the formation of phosphodiester linkages between 5'-phosphoryl and 3'-hydroxyl groups in double-stranded DNA using NAD as a coenzyme and as the energy source for the reaction. In Escherichia coli (strain ATCC 8739 / DSM 1576 / NBRC 3972 / NCIMB 8545 / WDCM 00012 / Crooks), this protein is DNA ligase B.